The following is a 602-amino-acid chain: Glutamyl-tRNA(Gln) amidotransferase subunit B, mitochondrial (602 aa).

The N-terminal 52 residues, 1–52 (MLQQWLRQSPAAAGLLRCSRYRGPQAALLQLSPQRAPTYHAIRSLQTSAAES), are a transit peptide targeting the mitochondrion. A disordered region spans residues 61–83 (QLKQGAKGLKAQKRQRRESEEAS).

This sequence belongs to the GatB/GatE family. GatB subfamily. As to quaternary structure, subunit of the heterotrimeric GatCAB amidotransferase (AdT) complex, composed of A, B and C subunits.

The protein resides in the mitochondrion. The enzyme catalyses L-glutamyl-tRNA(Gln) + L-glutamine + ATP + H2O = L-glutaminyl-tRNA(Gln) + L-glutamate + ADP + phosphate + H(+). Its function is as follows. Allows the formation of correctly charged Gln-tRNA(Gln) through the transamidation of misacylated Glu-tRNA(Gln) in the mitochondria. The reaction takes place in the presence of glutamine and ATP through an activated gamma-phospho-Glu-tRNA(Gln). This Aspergillus clavatus (strain ATCC 1007 / CBS 513.65 / DSM 816 / NCTC 3887 / NRRL 1 / QM 1276 / 107) protein is Glutamyl-tRNA(Gln) amidotransferase subunit B, mitochondrial.